The primary structure comprises 394 residues: Elongation factor Tu-A (394 aa).

The tr-type G domain occupies 10 to 204 (KPHVNVGTIG…HLDTYIPEPQ (195 aa)). The tract at residues 19-26 (GHVDHGKT) is G1. 19–26 (GHVDHGKT) contributes to the GTP binding site. Residue Thr-26 coordinates Mg(2+). The interval 60 to 64 (GITIN) is G2. Residues 81–84 (DCPG) form a G3 region. Residues 81 to 85 (DCPGH) and 136 to 139 (NKCD) contribute to the GTP site. A G4 region spans residues 136-139 (NKCD). The segment at 174 to 176 (SAL) is G5.

The protein belongs to the TRAFAC class translation factor GTPase superfamily. Classic translation factor GTPase family. EF-Tu/EF-1A subfamily. As to quaternary structure, monomer.

It is found in the cytoplasm. It catalyses the reaction GTP + H2O = GDP + phosphate + H(+). In terms of biological role, GTP hydrolase that promotes the GTP-dependent binding of aminoacyl-tRNA to the A-site of ribosomes during protein biosynthesis. This chain is Elongation factor Tu-A, found in Pasteurella multocida (strain Pm70).